Here is a 298-residue protein sequence, read N- to C-terminus: Protoheme IX farnesyltransferase (298 aa).

Helical transmembrane passes span 24–44 (VIQLIVFCALIGMVLAVPGLP), 49–69 (LQLALLACLGIWLVAGAAAAF), 100–120 (LLFSAVLCAAGSILLYFWVNP), 121–141 (LTMWLTFATFIGYAVVYTVIL), 149–169 (IVIGGASGAMPPVLGWAAMAG), 175–195 (ALILFLIIFLWTPPHFWALAL), 220–240 (LMVLLYTFILFAACLMPYVYG), 244–264 (WLYLIAAVVLNLGFCLYAFYL), and 277–297 (FRFSLIHLSLLFAALLLDHYL).

It belongs to the UbiA prenyltransferase family. Protoheme IX farnesyltransferase subfamily.

The protein resides in the cell inner membrane. The enzyme catalyses heme b + (2E,6E)-farnesyl diphosphate + H2O = Fe(II)-heme o + diphosphate. The protein operates within porphyrin-containing compound metabolism; heme O biosynthesis; heme O from protoheme: step 1/1. Converts heme B (protoheme IX) to heme O by substitution of the vinyl group on carbon 2 of heme B porphyrin ring with a hydroxyethyl farnesyl side group. In Albidiferax ferrireducens (strain ATCC BAA-621 / DSM 15236 / T118) (Rhodoferax ferrireducens), this protein is Protoheme IX farnesyltransferase.